A 192-amino-acid chain; its full sequence is Erythropoietin (192 aa).

A signal peptide spans 1 to 25 (MGARDCTPLLMLSFLLFPLGFPVLG). 2 cysteine pairs are disulfide-bonded: Cys32–Cys187 and Cys54–Cys58. Asn49 is a glycosylation site (N-linked (GlcNAc...) asparagine). Residues Asn63 and Asn108 are each glycosylated (N-linked (GlcNAc...) asparagine).

It belongs to the EPO/TPO family. In terms of tissue distribution, produced by kidney or liver of adult mammals and by liver of fetal or neonatal mammals.

It localises to the secreted. Its function is as follows. Hormone involved in the regulation of erythrocyte proliferation and differentiation and the maintenance of a physiological level of circulating erythrocyte mass. Binds to EPOR leading to EPOR dimerization and JAK2 activation thereby activating specific downstream effectors, including STAT1 and STAT3. The chain is Erythropoietin (EPO) from Bos taurus (Bovine).